The primary structure comprises 155 residues: MTAQLEGLRIGNGQKHCVIVSKFNEFITESLLKGAKDAYRQHGVAESDVTVIYVPGAFELPQTVKRVLGSKKYQFSAIVCLGAVIRGATSHYDLVSGEAAKVGSVADGSVPVIFGVITTESIEQAIERAGTKAGNKGYEAATTAIEMANLFKEIG.

Residues Phe-23, 57-59 (AFE), and 83-85 (AVI) contribute to the 5-amino-6-(D-ribitylamino)uracil site. 88–89 (AT) contributes to the (2S)-2-hydroxy-3-oxobutyl phosphate binding site. His-91 functions as the Proton donor in the catalytic mechanism. Phe-114 provides a ligand contact to 5-amino-6-(D-ribitylamino)uracil. Arg-128 serves as a coordination point for (2S)-2-hydroxy-3-oxobutyl phosphate.

Belongs to the DMRL synthase family.

The enzyme catalyses (2S)-2-hydroxy-3-oxobutyl phosphate + 5-amino-6-(D-ribitylamino)uracil = 6,7-dimethyl-8-(1-D-ribityl)lumazine + phosphate + 2 H2O + H(+). Its pathway is cofactor biosynthesis; riboflavin biosynthesis; riboflavin from 2-hydroxy-3-oxobutyl phosphate and 5-amino-6-(D-ribitylamino)uracil: step 1/2. Functionally, catalyzes the formation of 6,7-dimethyl-8-ribityllumazine by condensation of 5-amino-6-(D-ribitylamino)uracil with 3,4-dihydroxy-2-butanone 4-phosphate. This is the penultimate step in the biosynthesis of riboflavin. The chain is 6,7-dimethyl-8-ribityllumazine synthase from Leptospira biflexa serovar Patoc (strain Patoc 1 / Ames).